The primary structure comprises 125 residues: Protein ApaG (125 aa).

Residues 3–125 (TAVTEGIEVT…FPLVVPGSLN (123 aa)) enclose the ApaG domain.

The polypeptide is Protein ApaG (Anaeromyxobacter dehalogenans (strain 2CP-1 / ATCC BAA-258)).